We begin with the raw amino-acid sequence, 113 residues long: Meiotically up-regulated gene 98 protein, mitochondrial (113 aa).

The protein resides in the mitochondrion. Has a role in meiosis. This is Meiotically up-regulated gene 98 protein, mitochondrial (mug98) from Schizosaccharomyces pombe (strain 972 / ATCC 24843) (Fission yeast).